The sequence spans 174 residues: MTYVLFTLSVMLVMGFVGFSSKPSPIYGGLALVVSGVVGCMIILNYGGAYLGLVMFLIYLGGMMVVFGYTAAMAIEEYPETWGSGFEVLACFLVGLMMEVGLVLWVLDFDEVVVMVGFNDMGNWVVFEGEGSGLVRSDSIGAGALYDYGRWLVVVAGWTLFVGVYVVIEITRGN.

A run of 5 helical transmembrane segments spans residues 1–21, 24–44, 47–67, 86–106, and 151–171; these read MTYVLFTLSVMLVMGFVGFSS, SPIYGGLALVVSGVVGCMIIL, GGAYLGLVMFLIYLGGMMVVF, FEVLACFLVGLMMEVGLVLWV, and WLVVVAGWTLFVGVYVVIEIT.

It belongs to the complex I subunit 6 family. As to quaternary structure, core subunit of respiratory chain NADH dehydrogenase (Complex I) which is composed of 45 different subunits.

It localises to the mitochondrion inner membrane. It carries out the reaction a ubiquinone + NADH + 5 H(+)(in) = a ubiquinol + NAD(+) + 4 H(+)(out). Functionally, core subunit of the mitochondrial membrane respiratory chain NADH dehydrogenase (Complex I) which catalyzes electron transfer from NADH through the respiratory chain, using ubiquinone as an electron acceptor. Essential for the catalytic activity and assembly of complex I. This chain is NADH-ubiquinone oxidoreductase chain 6 (MT-ND6), found in Papio hamadryas (Hamadryas baboon).